Reading from the N-terminus, the 255-residue chain is tRNA (guanine-N(1)-)-methyltransferase (255 aa).

Residues Gly-119 and 139-144 each bind S-adenosyl-L-methionine; that span reads IGDFIL.

It belongs to the RNA methyltransferase TrmD family. As to quaternary structure, homodimer.

It is found in the cytoplasm. It catalyses the reaction guanosine(37) in tRNA + S-adenosyl-L-methionine = N(1)-methylguanosine(37) in tRNA + S-adenosyl-L-homocysteine + H(+). In terms of biological role, specifically methylates guanosine-37 in various tRNAs. The sequence is that of tRNA (guanine-N(1)-)-methyltransferase from Pseudoalteromonas translucida (strain TAC 125).